A 284-amino-acid polypeptide reads, in one-letter code: uncharacterized protein (284 aa).

A helical membrane pass occupies residues 9 to 28; the sequence is IILRWVVTLYIYGFILYQIT.

It is found in the membrane. This is an uncharacterized protein from Aquifex aeolicus (strain VF5).